The sequence spans 336 residues: Gibberellin 2-beta-dioxygenase 7 (336 aa).

Residues 191–291 (LENSFLRLNK…RMSIAFFVCP (101 aa)) enclose the Fe2OG dioxygenase domain. Residues His-216, Asp-218, and His-272 each contribute to the Fe cation site. The active site involves Arg-282. Arg-282 lines the 2-oxoglutarate pocket.

The protein belongs to the iron/ascorbate-dependent oxidoreductase family. GA2OX subfamily. It depends on Fe(2+) as a cofactor.

The catalysed reaction is gibberellin A1 + 2-oxoglutarate + O2 = gibberellin A8 + succinate + CO2. It participates in plant hormone biosynthesis; gibberellin biosynthesis. Its function is as follows. Catalyzes the 2-beta-hydroxylation of gibberellins (GA) precursors, rendering them unable to be converted to active GAs. Hydroxylates the C20-GA GA12 and GA53, but is not active on C19-GAs, like GA1, GA4, GA9 and GA20. This is Gibberellin 2-beta-dioxygenase 7 (GA2OX7) from Arabidopsis thaliana (Mouse-ear cress).